Reading from the N-terminus, the 912-residue chain is Probable dipeptidyl-aminopeptidase B (912 aa).

Positions 1-25 (MAAEKGESSDEERKPLTRDSMEYRD) are enriched in basic and acidic residues. Disordered regions lie at residues 1–31 (MAAE…NSLH) and 49–70 (GSTH…SDDG). The Cytoplasmic portion of the chain corresponds to 1 to 92 (MAAEKGESSD…GGKPVQKKVK (92 aa)). Residues 93-113 (IVLGFLLFLCLSGWSLSFVLF) traverse the membrane as a helical; Signal-anchor for type II membrane protein segment. Residues 114 to 912 (LFGGHESSKT…RAAIWVGLSI (799 aa)) lie on the Vacuolar side of the membrane. Asn-130, Asn-210, Asn-346, Asn-569, and Asn-656 each carry an N-linked (GlcNAc...) asparagine glycan. Ser-751 functions as the Charge relay system in the catalytic mechanism. Asn-810 carries N-linked (GlcNAc...) asparagine glycosylation. Catalysis depends on charge relay system residues Asp-828 and His-861. Asn-897 carries an N-linked (GlcNAc...) asparagine glycan.

Belongs to the peptidase S9B family.

It localises to the vacuole membrane. It carries out the reaction Release of an N-terminal dipeptide, Xaa-Yaa-|-Zaa-, from a polypeptide, preferentially when Yaa is Pro, provided Zaa is neither Pro nor hydroxyproline.. Its function is as follows. Type IV dipeptidyl-peptidase which removes N-terminal dipeptides sequentially from polypeptides having unsubstituted N-termini provided that the penultimate residue is proline. The chain is Probable dipeptidyl-aminopeptidase B (DAPB) from Paracoccidioides lutzii (strain ATCC MYA-826 / Pb01) (Paracoccidioides brasiliensis).